The primary structure comprises 282 residues: Bifunctional protein FolD (282 aa).

Residues 162–164 (GRS), serine 187, and valine 228 each bind NADP(+).

This sequence belongs to the tetrahydrofolate dehydrogenase/cyclohydrolase family. Homodimer.

It carries out the reaction (6R)-5,10-methylene-5,6,7,8-tetrahydrofolate + NADP(+) = (6R)-5,10-methenyltetrahydrofolate + NADPH. It catalyses the reaction (6R)-5,10-methenyltetrahydrofolate + H2O = (6R)-10-formyltetrahydrofolate + H(+). Its pathway is one-carbon metabolism; tetrahydrofolate interconversion. In terms of biological role, catalyzes the oxidation of 5,10-methylenetetrahydrofolate to 5,10-methenyltetrahydrofolate and then the hydrolysis of 5,10-methenyltetrahydrofolate to 10-formyltetrahydrofolate. This chain is Bifunctional protein FolD, found in Thermus thermophilus (strain ATCC 27634 / DSM 579 / HB8).